Consider the following 212-residue polypeptide: 3-isopropylmalate dehydratase small subunit (212 aa).

The protein belongs to the LeuD family. LeuD type 1 subfamily. Heterodimer of LeuC and LeuD.

It catalyses the reaction (2R,3S)-3-isopropylmalate = (2S)-2-isopropylmalate. It participates in amino-acid biosynthesis; L-leucine biosynthesis; L-leucine from 3-methyl-2-oxobutanoate: step 2/4. Functionally, catalyzes the isomerization between 2-isopropylmalate and 3-isopropylmalate, via the formation of 2-isopropylmaleate. In Beutenbergia cavernae (strain ATCC BAA-8 / DSM 12333 / CCUG 43141 / JCM 11478 / NBRC 16432 / NCIMB 13614 / HKI 0122), this protein is 3-isopropylmalate dehydratase small subunit.